The primary structure comprises 250 residues: 5-oxoprolinase subunit A (250 aa).

It belongs to the LamB/PxpA family. As to quaternary structure, forms a complex composed of PxpA, PxpB and PxpC.

It catalyses the reaction 5-oxo-L-proline + ATP + 2 H2O = L-glutamate + ADP + phosphate + H(+). Its function is as follows. Catalyzes the cleavage of 5-oxoproline to form L-glutamate coupled to the hydrolysis of ATP to ADP and inorganic phosphate. The chain is 5-oxoprolinase subunit A from Staphylococcus aureus (strain Mu3 / ATCC 700698).